The following is a 175-amino-acid chain: NADH-ubiquinone oxidoreductase chain 6 (175 aa).

A run of 6 helical transmembrane segments spans residues 1-21 (MMYI…GFSS), 25-45 (PVYG…IIMG), 51-71 (LGLV…GYTI), 87-107 (VVLG…MWLF), 112-132 (ELVG…EGGF), and 148-168 (YGFW…FIAI).

It belongs to the complex I subunit 6 family. As to quaternary structure, core subunit of respiratory chain NADH dehydrogenase (Complex I) which is composed of 45 different subunits.

The protein localises to the mitochondrion inner membrane. The catalysed reaction is a ubiquinone + NADH + 5 H(+)(in) = a ubiquinol + NAD(+) + 4 H(+)(out). Core subunit of the mitochondrial membrane respiratory chain NADH dehydrogenase (Complex I) which catalyzes electron transfer from NADH through the respiratory chain, using ubiquinone as an electron acceptor. Essential for the catalytic activity and assembly of complex I. The sequence is that of NADH-ubiquinone oxidoreductase chain 6 (MT-ND6) from Loxodonta africana (African elephant).